Consider the following 368-residue polypeptide: Acetyl-coenzyme A carboxylase carboxyl transferase subunit alpha (368 aa).

The CoA carboxyltransferase C-terminal domain maps to 44-294 (EIDNKLQEIY…RKSIEKNLNE (251 aa)).

Belongs to the AccA family. As to quaternary structure, acetyl-CoA carboxylase is a heterohexamer composed of biotin carboxyl carrier protein (AccB), biotin carboxylase (AccC) and two subunits each of ACCase subunit alpha (AccA) and ACCase subunit beta (AccD).

The protein localises to the cytoplasm. The catalysed reaction is N(6)-carboxybiotinyl-L-lysyl-[protein] + acetyl-CoA = N(6)-biotinyl-L-lysyl-[protein] + malonyl-CoA. It participates in lipid metabolism; malonyl-CoA biosynthesis; malonyl-CoA from acetyl-CoA: step 1/1. Its function is as follows. Component of the acetyl coenzyme A carboxylase (ACC) complex. First, biotin carboxylase catalyzes the carboxylation of biotin on its carrier protein (BCCP) and then the CO(2) group is transferred by the carboxyltransferase to acetyl-CoA to form malonyl-CoA. The protein is Acetyl-coenzyme A carboxylase carboxyl transferase subunit alpha of Pelagibacter ubique (strain HTCC1062).